Here is a 233-residue protein sequence, read N- to C-terminus: Cysteine-rich venom protein (233 aa).

The N-terminal stretch at 1–12 is a signal peptide; the sequence is PILAAVLQQSSG. Residues 31–159 enclose the SCP domain; that stretch reads VDLHNSLRRS…PYSYFFVCQY (129 aa). 8 disulfide bridges follow: Cys-68–Cys-146, Cys-85–Cys-160, Cys-141–Cys-157, Cys-179–Cys-186, Cys-182–Cys-191, Cys-195–Cys-228, Cys-204–Cys-222, and Cys-213–Cys-226. Residues 195-228 form the ShKT domain; that stretch reads CTRENKFTNCNTMVQQSSCQDNYMKTNCPASCFC.

The protein belongs to the CRISP family. In terms of tissue distribution, expressed by the venom gland.

The protein resides in the secreted. In terms of biological role, blocks contraction of smooth muscle elicited by high potassium-induced depolarization, but does not block caffeine-stimulated contraction. May target voltage-gated calcium channels on smooth muscle. This chain is Cysteine-rich venom protein, found in Trimeresurus stejnegeri (Chinese green tree viper).